Reading from the N-terminus, the 954-residue chain is Glycine dehydrogenase (decarboxylating) (954 aa).

Lysine 704 is subject to N6-(pyridoxal phosphate)lysine.

It belongs to the GcvP family. In terms of assembly, the glycine cleavage system is composed of four proteins: P, T, L and H. The cofactor is pyridoxal 5'-phosphate.

The enzyme catalyses N(6)-[(R)-lipoyl]-L-lysyl-[glycine-cleavage complex H protein] + glycine + H(+) = N(6)-[(R)-S(8)-aminomethyldihydrolipoyl]-L-lysyl-[glycine-cleavage complex H protein] + CO2. Its function is as follows. The glycine cleavage system catalyzes the degradation of glycine. The P protein binds the alpha-amino group of glycine through its pyridoxal phosphate cofactor; CO(2) is released and the remaining methylamine moiety is then transferred to the lipoamide cofactor of the H protein. The chain is Glycine dehydrogenase (decarboxylating) from Rhizobium leguminosarum bv. trifolii (strain WSM2304).